The following is a 124-amino-acid chain: Mediator of RNA polymerase II transcription subunit 31 (124 aa).

It belongs to the Mediator complex subunit 31 family. As to quaternary structure, component of the Mediator complex.

The protein resides in the nucleus. Its function is as follows. Component of the Mediator complex, a coactivator involved in the regulated transcription of nearly all RNA polymerase II-dependent genes. Mediator functions as a bridge to convey information from gene-specific regulatory proteins to the basal RNA polymerase II transcription machinery. Mediator is recruited to promoters by direct interactions with regulatory proteins and serves as a scaffold for the assembly of a functional preinitiation complex with RNA polymerase II and the general transcription factors. The polypeptide is Mediator of RNA polymerase II transcription subunit 31 (SOH1) (Kluyveromyces lactis (strain ATCC 8585 / CBS 2359 / DSM 70799 / NBRC 1267 / NRRL Y-1140 / WM37) (Yeast)).